The chain runs to 136 residues: Mediator of RNA polymerase II transcription subunit 22 (136 aa).

It belongs to the Mediator complex subunit 22 family. In terms of assembly, component of the Mediator complex.

It is found in the nucleus. Its function is as follows. Component of the Mediator complex, a coactivator involved in the regulated transcription of nearly all RNA polymerase II-dependent genes. Mediator functions as a bridge to convey information from gene-specific regulatory proteins to the basal RNA polymerase II transcription machinery. Mediator is recruited to promoters by direct interactions with regulatory proteins and serves as a scaffold for the assembly of a functional preinitiation complex with RNA polymerase II and the general transcription factors. In Schizosaccharomyces pombe (strain 972 / ATCC 24843) (Fission yeast), this protein is Mediator of RNA polymerase II transcription subunit 22 (med22).